A 60-amino-acid polypeptide reads, in one-letter code: MISQDLINRINELYKKQKESGLTDEEQQEQQKLRQEYLKGIRKQVLKQMGEDPEKEPKNN.

It belongs to the UPF0291 family.

It is found in the cytoplasm. The polypeptide is UPF0291 protein Nther_1806 (Natranaerobius thermophilus (strain ATCC BAA-1301 / DSM 18059 / JW/NM-WN-LF)).